Reading from the N-terminus, the 403-residue chain is Presqualene diphosphate synthase (403 aa).

Positions 84, 87, and 88 each coordinate Mg(2+).

It belongs to the phytoene/squalene synthase family. The cofactor is Mg(2+).

It catalyses the reaction 2 (2E,6E)-farnesyl diphosphate = presqualene diphosphate + diphosphate. Catalyzes the biosynthesis of presqualene diphosphate (PSPP). Works in combination with SSL-2 or SSL-3 to produce respectively squalene or botryococcene. In most other species, farnesyl diphosphate (FPP) is converted into squalene in a two-step reaction by a single enzyme. The protein is Presqualene diphosphate synthase (SSL-1) of Botryococcus braunii (Green alga).